Here is a 569-residue protein sequence, read N- to C-terminus: Probable santalene synthase (569 aa).

(2E)-geranyl diphosphate contacts are provided by Arg284, Asp321, Asp325, Arg460, and Asn463. Residues Asp321 and Asp325 each coordinate Mg(2+). The short motif at 321 to 325 (DDAYD) is the DDXXD motif element. Mg(2+) contacts are provided by Asn463, Thr467, and Glu471.

The protein belongs to the terpene synthase family. Tpsb subfamily. The cofactor is Mg(2+). Requires Mn(2+) as cofactor.

Functionally, catalyzes the formation of santalene. In Santalum murrayanum (Bitter quandong), this protein is Probable santalene synthase (SSY).